We begin with the raw amino-acid sequence, 214 residues long: cAMP-activated global transcriptional regulator Vfr (214 aa).

Residues 59-60, 73-75, 87-88, 132-133, Arg179, and Arg185 contribute to the 3',5'-cyclic AMP site; these read RE, GEL, RS, and TT. Residues 142–214 enclose the HTH crp-type domain; the sequence is LDVTGRVART…GKTMVVFGTR (73 aa). Residues 174-193 constitute a DNA-binding region (H-T-H motif); it reads RQEIGRIVGCSREMVGRVLK.

As to quaternary structure, homodimer.

Global cAMP-dependent transcriptional regulator that controls virulence gene expression by distinct cAMP-dependent and -independent mechanisms, which allow to fine tune its virulence program in response to specific host cues or environments. Controls the expression of many regulatory targets including type II, type III and type IV secretion systems, flagellar-mediated motility, and quorum sensing systems. Transcriptional control is exerted by binding to a well-characterized consensus site (5'-ANWWTGNGAWNYAGWTCACAT) within target promoters. Directly binds to the toxA upstream region to regulate exotoxin A production, to the lasR gene promoter to activate the las quorum-sensing system or to the exsA promoter to regulate type III secretion system. Autoregulates as well its own expression. In Pseudomonas aeruginosa (strain ATCC 15692 / DSM 22644 / CIP 104116 / JCM 14847 / LMG 12228 / 1C / PRS 101 / PAO1), this protein is cAMP-activated global transcriptional regulator Vfr (vfr).